A 496-amino-acid chain; its full sequence is RNA-binding motif protein, Y chromosome, family 1 member B (496 aa).

Residues 8-85 (GKLFIGGLNR…KAIKVEQAKK (78 aa)) form the RRM domain. Disordered regions lie at residues 67–349 (DMNG…HRDY) and 452–496 (KDQR…SSRY). 2 stretches are compositionally biased toward low complexity: residues 97–114 (PASSRNRSPSGSLRSARG) and 149–159 (PVKRGPSSRSG). Residues 175 to 184 (NSWMGSQGPM) show a composition bias toward polar residues. Basic and acidic residues-rich tracts occupy residues 204 to 214 (RNDRMSTRHDG), 242 to 253 (DNGHSNRDEHSS), 276 to 289 (AYRDYGHSRRDESY), 313 to 326 (GYRDYGHSRRHESY), 335 to 349 (SSRETRDYAPPHRDY), and 484 to 496 (GESRSEKGDSSRY).

In terms of assembly, interacts with splicing factor proteins SFRS3/SRP20, TRA2B/SFRS10, KHDRBS1/SAM68 and KHDRBS3. In terms of tissue distribution, testis-specific.

Its subcellular location is the nucleus. RNA-binding protein which may be involved in spermatogenesis. Required for sperm development, possibly by participating in pre-mRNA splicing in the testis. This is RNA-binding motif protein, Y chromosome, family 1 member B (RBMY1B) from Homo sapiens (Human).